We begin with the raw amino-acid sequence, 82 residues long: Small ribosomal subunit protein bS20 (82 aa).

The tract at residues 1 to 29 is disordered; the sequence is MPNIKSAKKDLRRSRAAAVRNRAQRSALR. The segment covering 16-29 has biased composition (low complexity); the sequence is AAAVRNRAQRSALR.

This sequence belongs to the bacterial ribosomal protein bS20 family.

Its function is as follows. Binds directly to 16S ribosomal RNA. The sequence is that of Small ribosomal subunit protein bS20 from Gemmatimonas aurantiaca (strain DSM 14586 / JCM 11422 / NBRC 100505 / T-27).